The chain runs to 410 residues: Peptidase T (410 aa).

Histidine 79 contributes to the Zn(2+) binding site. Aspartate 81 is an active-site residue. Position 142 (aspartate 142) interacts with Zn(2+). Glutamate 176 functions as the Proton acceptor in the catalytic mechanism. Zn(2+)-binding residues include glutamate 177, aspartate 199, and histidine 381.

Belongs to the peptidase M20B family. The cofactor is Zn(2+).

The protein resides in the cytoplasm. It catalyses the reaction Release of the N-terminal residue from a tripeptide.. Functionally, cleaves the N-terminal amino acid of tripeptides. The protein is Peptidase T of Geobacillus sp. (strain WCH70).